Reading from the N-terminus, the 645-residue chain is Cysteine-rich receptor-like protein kinase 19 (645 aa).

The signal sequence occupies residues 1 to 20; the sequence is MSSLISFIFLFLFSSITASA. Over 21-262 the chain is Extracellular; it reads QNTFYLYHNC…PRPGKGGNSS (242 aa). 2 consecutive Gnk2-homologous domains span residues 24-129 and 135-239; these read FYLY…NRNI and TDGG…NYAF. 7 N-linked (GlcNAc...) asparagine glycosylation sites follow: asparagine 29, asparagine 39, asparagine 57, asparagine 101, asparagine 185, asparagine 241, and asparagine 260. A helical transmembrane segment spans residues 263–283; it reads VIIIAVVVPITVLFLLLVAVF. Residues 284-645 lie on the Cytoplasmic side of the membrane; it reads SVRAKNKRTL…EASITRVTPR (362 aa). A Protein kinase domain is found at 326–603; that stretch reads FLPINKLGQG…IVQMLTTSLI (278 aa). ATP contacts are provided by residues 332–340 and lysine 354; that span reads LGQGGFGEV. Tyrosine 399 carries the phosphotyrosine modification. Residue aspartate 451 is the Proton acceptor of the active site. A Phosphothreonine modification is found at threonine 491. At tyrosine 499 the chain carries Phosphotyrosine. Residues 616-645 form a disordered region; that stretch reads RSKQEQAGPSIDSSTHCSVDEASITRVTPR. Positions 620–632 are enriched in polar residues; it reads EQAGPSIDSSTHC.

The protein belongs to the protein kinase superfamily. Ser/Thr protein kinase family. CRK subfamily. As to quaternary structure, interacts with MWL1.

The protein resides in the membrane. The catalysed reaction is L-seryl-[protein] + ATP = O-phospho-L-seryl-[protein] + ADP + H(+). It carries out the reaction L-threonyl-[protein] + ATP = O-phospho-L-threonyl-[protein] + ADP + H(+). This is Cysteine-rich receptor-like protein kinase 19 (CRK19) from Arabidopsis thaliana (Mouse-ear cress).